The chain runs to 241 residues: 2-heptyl-1-hydroxyquinolin-4(1H)-one methyltransferase (241 aa).

This sequence belongs to the methyltransferase superfamily. In terms of assembly, monomer.

It is found in the cytoplasm. The catalysed reaction is 2-heptyl-1-hydroxy-4(1H)-quinolinone + S-adenosyl-L-methionine = 2-heptyl-1-methoxy-4(1H)-quinolinone + S-adenosyl-L-homocysteine + H(+). In terms of biological role, involved in cellular response to chemical stress and may contribute to resistance toward antimicrobial natural compounds as well as drugs. Catalyzes the methylation and detoxification of the P.aeruginosa toxin 2-heptyl-1-hydroxy-4(1H)-quinolinone (HQNO) to 2-heptyl-1-methoxy-4(1H)-quinolinone (HMOQ). The sequence is that of 2-heptyl-1-hydroxyquinolin-4(1H)-one methyltransferase from Mycobacterium bovis (strain BCG / Pasteur 1173P2).